We begin with the raw amino-acid sequence, 176 residues long: Inner membrane-spanning protein YciB (176 aa).

Helical transmembrane passes span 3–23 (FLFD…WGIF), 24–44 (TATA…AFRH), 49–69 (TMLW…LVLH), 72–92 (KFIQ…LLAA), 121–141 (LAWA…VHNF), and 149–169 (FKLF…SLWL).

This sequence belongs to the YciB family.

The protein resides in the cell inner membrane. In terms of biological role, plays a role in cell envelope biogenesis, maintenance of cell envelope integrity and membrane homeostasis. The chain is Inner membrane-spanning protein YciB from Burkholderia cenocepacia (strain ATCC BAA-245 / DSM 16553 / LMG 16656 / NCTC 13227 / J2315 / CF5610) (Burkholderia cepacia (strain J2315)).